Reading from the N-terminus, the 250-residue chain is DNA polymerase sliding clamp (250 aa).

It belongs to the PCNA family. In terms of assembly, homotrimer. The subunits circularize to form a toroid; DNA passes through its center. Replication factor C (RFC) is required to load the toroid on the DNA.

Functionally, sliding clamp subunit that acts as a moving platform for DNA processing. Responsible for tethering the catalytic subunit of DNA polymerase and other proteins to DNA during high-speed replication. The polypeptide is DNA polymerase sliding clamp (Methanococcus maripaludis (strain C5 / ATCC BAA-1333)).